The primary structure comprises 256 residues: Protein N-terminal and lysine N-methyltransferase EFM7 (256 aa).

A disordered region spans residues 1-26; the sequence is MSDTESLNDALGLFDEPEDFRPEKPK. S-adenosyl-L-methionine-binding positions include Trp64, 90 to 92, Asp112, Trp145, and Ser168; that span reads GAA.

Belongs to the class I-like SAM-binding methyltransferase superfamily. EFM7 family.

Its subcellular location is the cytoplasm. Functionally, S-adenosyl-L-methionine-dependent protein methyltransferase that trimethylates the N-terminal glycine 'Gly-2' of elongation factor 1-alpha, before also catalyzing the mono- and dimethylation of 'Lys-3'. The sequence is that of Protein N-terminal and lysine N-methyltransferase EFM7 from Candida glabrata (strain ATCC 2001 / BCRC 20586 / JCM 3761 / NBRC 0622 / NRRL Y-65 / CBS 138) (Yeast).